A 255-amino-acid chain; its full sequence is MNTNKIALIYNKNSKHLAIIEEIKKLFNYCKIEDAEVIIIIGGDGELLHNIHRYMHLNIPFYGLNLGSLGFLMNPLDTKKLLQNIYESTVSVLNPLLMQAEDTNGQIYKALAINEVSIFRKTNQAAKFRIDINGVERMSELVADGALVATPAGSSAYNLSAGGPILPLASNMLCLTPICSFRPRRWHGALLLSSATIKFEILNITKRPVNATADFQEFNNITRVTVKSTKDQHIKLLFNKNHTLEDRIIKEQFGE.

D44 acts as the Proton acceptor in catalysis. NAD(+)-binding positions include 44–45 (DG), H49, 114–115 (NE), D144, A152, 155–160 (SAYNLS), and Q216.

It belongs to the NAD kinase family. The cofactor is a divalent metal cation.

It is found in the cytoplasm. It carries out the reaction NAD(+) + ATP = ADP + NADP(+) + H(+). Functionally, involved in the regulation of the intracellular balance of NAD and NADP, and is a key enzyme in the biosynthesis of NADP. Catalyzes specifically the phosphorylation on 2'-hydroxyl of the adenosine moiety of NAD to yield NADP. This chain is NAD kinase, found in Rickettsia typhi (strain ATCC VR-144 / Wilmington).